Here is a 252-residue protein sequence, read N- to C-terminus: MPAVVNIAAYKFVVLDNLPTLRADVLAQAGAVNLKGTVLLAEEGINLFLAGSRDKIDTFLQWLRADSRLADLEAKFSLSETVPFRRLRVKIKREIIRMDHPAIQPQSGRAPAVSPATLARWLEQGVDDQGRPVVMLDTRNAFEVDAGTFEGAVDWRIERFTQFPAAVQAHRDSLRGKTVVSFCTGGIRCEKAALYMAESGVEHVYQLDGGILKYFEETGGKGFNGNCFVFDERVALDPALAPAGAVAQLATA.

The region spanning 129–223 (QGRPVVMLDT…YFEETGGKGF (95 aa)) is the Rhodanese domain. Residue C183 is the Cysteine persulfide intermediate of the active site.

Belongs to the TrhO family.

It carries out the reaction uridine(34) in tRNA + AH2 + O2 = 5-hydroxyuridine(34) in tRNA + A + H2O. Its function is as follows. Catalyzes oxygen-dependent 5-hydroxyuridine (ho5U) modification at position 34 in tRNAs. This is tRNA uridine(34) hydroxylase from Bordetella petrii (strain ATCC BAA-461 / DSM 12804 / CCUG 43448).